Here is a 246-residue protein sequence, read N- to C-terminus: Predicted GPI-anchored protein 33 (246 aa).

Positions methionine 1 to alanine 16 are cleaved as a signal peptide. A glycan (N-linked (GlcNAc...) asparagine) is linked at asparagine 214. Residue asparagine 219 is the site of GPI-anchor amidated asparagine attachment. Positions alanine 220–isoleucine 246 are cleaved as a propeptide — removed in mature form.

It is found in the cell membrane. This chain is Predicted GPI-anchored protein 33 (PGA33), found in Candida albicans (strain SC5314 / ATCC MYA-2876) (Yeast).